Consider the following 475-residue polypeptide: Aspartyl/glutamyl-tRNA(Asn/Gln) amidotransferase subunit B (475 aa).

The protein belongs to the GatB/GatE family. GatB subfamily. As to quaternary structure, heterotrimer of A, B and C subunits.

It carries out the reaction L-glutamyl-tRNA(Gln) + L-glutamine + ATP + H2O = L-glutaminyl-tRNA(Gln) + L-glutamate + ADP + phosphate + H(+). It catalyses the reaction L-aspartyl-tRNA(Asn) + L-glutamine + ATP + H2O = L-asparaginyl-tRNA(Asn) + L-glutamate + ADP + phosphate + 2 H(+). In terms of biological role, allows the formation of correctly charged Asn-tRNA(Asn) or Gln-tRNA(Gln) through the transamidation of misacylated Asp-tRNA(Asn) or Glu-tRNA(Gln) in organisms which lack either or both of asparaginyl-tRNA or glutaminyl-tRNA synthetases. The reaction takes place in the presence of glutamine and ATP through an activated phospho-Asp-tRNA(Asn) or phospho-Glu-tRNA(Gln). The protein is Aspartyl/glutamyl-tRNA(Asn/Gln) amidotransferase subunit B of Bacillus anthracis (strain A0248).